The sequence spans 337 residues: tRNA N6-adenosine threonylcarbamoyltransferase (337 aa).

Residues histidine 111 and histidine 115 each coordinate Fe cation. Residues leucine 134 to glycine 138, aspartate 167, glycine 180, and asparagine 272 contribute to the substrate site. Aspartate 300 is a binding site for Fe cation.

Belongs to the KAE1 / TsaD family. Fe(2+) serves as cofactor.

The protein resides in the cytoplasm. The catalysed reaction is L-threonylcarbamoyladenylate + adenosine(37) in tRNA = N(6)-L-threonylcarbamoyladenosine(37) in tRNA + AMP + H(+). Required for the formation of a threonylcarbamoyl group on adenosine at position 37 (t(6)A37) in tRNAs that read codons beginning with adenine. Is involved in the transfer of the threonylcarbamoyl moiety of threonylcarbamoyl-AMP (TC-AMP) to the N6 group of A37, together with TsaE and TsaB. TsaD likely plays a direct catalytic role in this reaction. The protein is tRNA N6-adenosine threonylcarbamoyltransferase of Pectobacterium atrosepticum (strain SCRI 1043 / ATCC BAA-672) (Erwinia carotovora subsp. atroseptica).